The chain runs to 103 residues: Histone H4 (103 aa).

The segment covering 1 to 14 (MSGRGKGGKGLGKG) has biased composition (gly residues). Residues 1 to 20 (MSGRGKGGKGLGKGGAKRHR) form a disordered region. S2 is modified (N-acetylserine). K17 bears the N6-acetyllysine mark. Residues 17-21 (KRHRK) mediate DNA binding. K21 carries the N6-methyllysine modification.

Belongs to the histone H4 family. As to quaternary structure, the nucleosome is a histone octamer containing two molecules each of H2A, H2B, H3 and H4 assembled in one H3-H4 heterotetramer and two H2A-H2B heterodimers. The octamer wraps approximately 147 bp of DNA.

The protein localises to the nucleus. Its subcellular location is the chromosome. Functionally, core component of nucleosome. Nucleosomes wrap and compact DNA into chromatin, limiting DNA accessibility to the cellular machineries which require DNA as a template. Histones thereby play a central role in transcription regulation, DNA repair, DNA replication and chromosomal stability. DNA accessibility is regulated via a complex set of post-translational modifications of histones, also called histone code, and nucleosome remodeling. The chain is Histone H4 from Eucalyptus globulus (Tasmanian blue gum).